The following is a 275-amino-acid chain: Large ribosomal subunit protein uL2 (275 aa).

The segment at 221 to 275 (VRGVAMNPVDHPMGGGEGKSSGGRHPCSPWGQQSKGVRTRNNKRTDQFIVKRRSK) is disordered.

It belongs to the universal ribosomal protein uL2 family. As to quaternary structure, part of the 50S ribosomal subunit. Forms a bridge to the 30S subunit in the 70S ribosome.

One of the primary rRNA binding proteins. Required for association of the 30S and 50S subunits to form the 70S ribosome, for tRNA binding and peptide bond formation. It has been suggested to have peptidyltransferase activity; this is somewhat controversial. Makes several contacts with the 16S rRNA in the 70S ribosome. The sequence is that of Large ribosomal subunit protein uL2 from Desulfosudis oleivorans (strain DSM 6200 / JCM 39069 / Hxd3) (Desulfococcus oleovorans).